The primary structure comprises 403 residues: MVHCAGCERPILDRFLLNVLDRAWHVKCVQCCECKCNLTEKCFSREGKLYCKNDFFRRFGTKCAGCAQGISPSDLVRRARSKVFHLNCFTCMMCNKQLSTGEELYIIDENKFVCKEDYLNNNNAAKENSFISVTGSDPSLSPESQDPLQDDAKDSESANVSDKEAGINENDDQNLGAKRRGPRTTIKAKQLETLKAAFAATPKPTRHIREQLAQETGLNMRVIQVWFQNRRSKERRMKQLSALGARRHAFFRSPRRMRPLVDRLEPGELIPNGPFAFYGDYQSEYYGPGSNYDFFPQGPPSSQAQTPVDLPFVPSSVPAGTPLGAMDHPIPGHHPSSDAQRFTDIMSHPPGDSPSPEPNLPGSMHSMSAEVFGQSPPFSSLSVNGGYGNHLSHPPEMNETAVW.

2 consecutive LIM zinc-binding domains span residues 4–54 and 63–117; these read CAGC…CKND and CAGC…CKED. The segment covering 131–147 has biased composition (polar residues); the sequence is ISVTGSDPSLSPESQDP. 2 disordered regions span residues 131–185 and 318–366; these read ISVT…PRTT and PAGT…SMHS. The span at 150-166 shows a compositional bias: basic and acidic residues; the sequence is DDAKDSESANVSDKEAG. Positions 179–238 form a DNA-binding region, homeobox; it reads RRGPRTTIKAKQLETLKAAFAATPKPTRHIREQLAQETGLNMRVIQVWFQNRRSKERRMK.

As to quaternary structure, interacts with ldb1 via the tandem LIM domains. Both LIM domains are required for optimal binding and binding relieves the inhibitory effect of the LIM domains and activates lhx1. Binding to ldb1 also prevents degradation of ldb1 by rnf12. The stoichiometry of lhx1 and ldb1 is important for their function and an excess of ldb1 can inhibit lhx1 function. Interacts with the N-terminal region of rnf12 by a homeobox-dependent mechanism. Exhibits a biphasic expression pattern. Initially localized to the Spemann organizer region of gastrulae, leading to expression in prechordal mesoderm and notochord. In the second phase, expressed in the lateral mesoderm and neural plate, eventually concentrating in the pronephros and the CNS. Expressed in the pronephros primordium by late gastrula (stage 12.5) and becomes restricted to the tips of the tubules and ducts as kidney development progresses. In the CNS, becomes progressively recognizable in anatomically distinct structures during larval development. Within the forebrain, shows almost identical expression to lhx5 in the diencephalon, being expressed in alternating stripes to lhx2 and lhx9. Expressed in the diencephalic pretectum within prosomere 1, hypothalamus, ventral thalamus and zona limitans intrathalamica. In the telencephalon, the expression pattern is distinct from lhx5, being localized in the pallium and subpallium. Also expressed in the ventral territories of midbrain (mesencephalon) and hindbrain (rhombencephalon), being expressed in the mesencephalic tegmentum and hindbrain reticular formation. Also shows intense expression in the cerebellum including Purkinje cells.

The protein resides in the nucleus. Involved in the establishment of the body plan via the Spemann organizer during gastrulation. Transcriptional activator required to induce organizer gene expression downstream of siamois. Promotes head formation by binding to 5'-TAAT'-3' elements in the promoters of head organizer genes cer1 and gsc to stimulate expression. Binds as a complex with siamois and mix-A/mix.1 to the cer1 promoter, and with ldb1 and otx2 to the gsc promoter. Also involved in neural induction via the organizer, including a role in notochord formation. Acts synergistically with ldb1 and ssbp in subsequent axis formation. Involved in kidney development, acting synergistically with pax8 to establish the pronephric primordium in late gastrulae/early neurulae and with pax2 during pronephric morphogenesis in tailbud stages. Has a later role in mediating the activity of inhibitors of ventralization. The protein is LIM/homeobox protein Lhx1 (lhx1) of Xenopus laevis (African clawed frog).